The sequence spans 843 residues: N-acetyltransferase ESCO1 (843 aa).

Positions 1–78 are disordered; it reads MSIQEKSKEN…SASCSADKTA (78 aa). Residues 18-28 are compositionally biased toward acidic residues; it reads SEDENLEEEVE. Residues 66 to 78 are compositionally biased toward polar residues; the sequence is STRSASCSADKTA. At S202 the chain carries Phosphoserine. The disordered stretch occupies residues 262–300; the sequence is NELRKSAHTQVSTSTKRPQIPLPLVPEHSDDQELEQAGK. The segment covering 269-278 has biased composition (polar residues); sequence HTQVSTSTKR. K335 participates in a covalent cross-link: Glycyl lysine isopeptide (Lys-Gly) (interchain with G-Cter in SUMO2). The residue at position 415 (S415) is a Phosphoserine. Residues 546 to 584 are disordered; sequence DRTFPGSAPNQQHSVLSDEASINRKNRDVPPNHSQLKHD. A compositionally biased stretch (basic and acidic residues) spans 566 to 584; sequence SINRKNRDVPPNHSQLKHD. Residues 620–644 form a CCHH-type zinc finger; the sequence is VSCNICGMLYTASNPEDETQHLLFH. Acetyl-CoA is bound by residues 775-777, 783-788, and 815-817; these read IWV, RKKIAS, and TPD.

Belongs to the acetyltransferase family. ECO subfamily. In terms of assembly, the subunit structure is controversial. Monomer. Homodimer. In terms of processing, phosphorylated during mitosis.

The protein localises to the nucleus. Its subcellular location is the chromosome. The enzyme catalyses L-lysyl-[protein] + acetyl-CoA = N(6)-acetyl-L-lysyl-[protein] + CoA + H(+). In terms of biological role, acetyltransferase required for the establishment of sister chromatid cohesion. Couples the processes of cohesion and DNA replication to ensure that only sister chromatids become paired together. In contrast to the structural cohesins, the deposition and establishment factors are required only during S phase. Acts by mediating the acetylation of cohesin component SMC3. This chain is N-acetyltransferase ESCO1 (Esco1), found in Mus musculus (Mouse).